A 424-amino-acid polypeptide reads, in one-letter code: Methylenetetrahydrofolate--tRNA-(uracil-5-)-methyltransferase TrmFO 1 (424 aa).

FAD is bound at residue 8-13 (GAGLSG).

Belongs to the MnmG family. TrmFO subfamily. FAD serves as cofactor.

The protein localises to the cytoplasm. It carries out the reaction uridine(54) in tRNA + (6R)-5,10-methylene-5,6,7,8-tetrahydrofolate + NADH + H(+) = 5-methyluridine(54) in tRNA + (6S)-5,6,7,8-tetrahydrofolate + NAD(+). The enzyme catalyses uridine(54) in tRNA + (6R)-5,10-methylene-5,6,7,8-tetrahydrofolate + NADPH + H(+) = 5-methyluridine(54) in tRNA + (6S)-5,6,7,8-tetrahydrofolate + NADP(+). In terms of biological role, catalyzes the folate-dependent formation of 5-methyl-uridine at position 54 (M-5-U54) in all tRNAs. The polypeptide is Methylenetetrahydrofolate--tRNA-(uracil-5-)-methyltransferase TrmFO 1 (Mycoplasma mycoides subsp. mycoides SC (strain CCUG 32753 / NCTC 10114 / PG1)).